The chain runs to 274 residues: Dermonecrotic toxin SdSicTox-betaIIB1biii (274 aa).

His5 is a catalytic residue. 2 residues coordinate Mg(2+): Glu25 and Asp27. The active-site Nucleophile is the His41. Disulfide bonds link Cys45-Cys51 and Cys47-Cys190. Position 85 (Asp85) interacts with Mg(2+).

This sequence belongs to the arthropod phospholipase D family. Class II subfamily. Mg(2+) serves as cofactor. Expressed by the venom gland.

It is found in the secreted. The catalysed reaction is an N-(acyl)-sphingosylphosphocholine = an N-(acyl)-sphingosyl-1,3-cyclic phosphate + choline. It carries out the reaction an N-(acyl)-sphingosylphosphoethanolamine = an N-(acyl)-sphingosyl-1,3-cyclic phosphate + ethanolamine. It catalyses the reaction a 1-acyl-sn-glycero-3-phosphocholine = a 1-acyl-sn-glycero-2,3-cyclic phosphate + choline. The enzyme catalyses a 1-acyl-sn-glycero-3-phosphoethanolamine = a 1-acyl-sn-glycero-2,3-cyclic phosphate + ethanolamine. Functionally, dermonecrotic toxins cleave the phosphodiester linkage between the phosphate and headgroup of certain phospholipids (sphingolipid and lysolipid substrates), forming an alcohol (often choline) and a cyclic phosphate. This toxin acts on sphingomyelin (SM). It may also act on ceramide phosphoethanolamine (CPE), lysophosphatidylcholine (LPC) and lysophosphatidylethanolamine (LPE), but not on lysophosphatidylserine (LPS), and lysophosphatidylglycerol (LPG). It acts by transphosphatidylation, releasing exclusively cyclic phosphate products as second products. Induces dermonecrosis, hemolysis, increased vascular permeability, edema, inflammatory response, and platelet aggregation. The polypeptide is Dermonecrotic toxin SdSicTox-betaIIB1biii (Sicarius cf. damarensis (strain GJB-2008) (Six-eyed sand spider)).